The following is a 381-amino-acid chain: tRNA (guanine(26)-N(2))-dimethyltransferase (381 aa).

In terms of domain architecture, Trm1 methyltransferase spans 6 to 378 (FEVHEGKAKV…APYEVFVEVM (373 aa)). S-adenosyl-L-methionine contacts are provided by R38, R63, D80, D122, and A123.

Belongs to the class I-like SAM-binding methyltransferase superfamily. Trm1 family. In terms of assembly, monomer.

It catalyses the reaction guanosine(26) in tRNA + 2 S-adenosyl-L-methionine = N(2)-dimethylguanosine(26) in tRNA + 2 S-adenosyl-L-homocysteine + 2 H(+). In terms of biological role, dimethylates a single guanine residue at position 26 of a number of tRNAs using S-adenosyl-L-methionine as donor of the methyl groups. In Pyrococcus furiosus (strain ATCC 43587 / DSM 3638 / JCM 8422 / Vc1), this protein is tRNA (guanine(26)-N(2))-dimethyltransferase.